The primary structure comprises 364 residues: tRNA-specific 2-thiouridylase MnmA 2 (364 aa).

Residues 10 to 17 (GMSGGVDS) and Met-36 each bind ATP. Cys-106 serves as the catalytic Nucleophile. Cys-106 and Cys-204 are disulfide-bonded. Gly-130 serves as a coordination point for ATP. The interaction with tRNA stretch occupies residues 154 to 156 (KDQ). Cys-204 acts as the Cysteine persulfide intermediate in catalysis. Residues 310-311 (RY) form an interaction with tRNA region.

Belongs to the MnmA/TRMU family.

The protein localises to the cytoplasm. The catalysed reaction is S-sulfanyl-L-cysteinyl-[protein] + uridine(34) in tRNA + AH2 + ATP = 2-thiouridine(34) in tRNA + L-cysteinyl-[protein] + A + AMP + diphosphate + H(+). Catalyzes the 2-thiolation of uridine at the wobble position (U34) of tRNA, leading to the formation of s(2)U34. This Caldanaerobacter subterraneus subsp. tengcongensis (strain DSM 15242 / JCM 11007 / NBRC 100824 / MB4) (Thermoanaerobacter tengcongensis) protein is tRNA-specific 2-thiouridylase MnmA 2.